We begin with the raw amino-acid sequence, 88 residues long: Small ribosomal subunit protein uS15c (88 aa).

It belongs to the universal ribosomal protein uS15 family. Part of the 30S ribosomal subunit.

It localises to the plastid. The protein localises to the chloroplast. The protein is Small ribosomal subunit protein uS15c (rps15) of Pinus koraiensis (Korean pine).